A 728-amino-acid polypeptide reads, in one-letter code: FYN-binding protein 2 (728 aa).

Disordered regions lie at residues 17–76 (QNLD…PLQP), 250–287 (QAPE…RPPI), and 367–390 (PGKN…EKQP). Polar residues predominate over residues 42–75 (GTQSTQILANGKPLSSNHKQRTPYCSSSESQPLQ). Residues 276–285 (GPPPPKPSRP) are compositionally biased toward pro residues. Residues 377–390 (SAKHEDKKMKEKQP) show a composition bias toward basic and acidic residues. Phosphotyrosine is present on Tyr-491. Positions 521–524 (YEDV) match the SH2-binding; to LCP2 motif. Tyr-587 carries the phosphotyrosine modification. In terms of domain architecture, SH3 spans 664–724 (IVINTAVACS…LIEHLDFKHQ (61 aa)).

In terms of assembly, interacts with SKAP1, LCK and FYN. The phosphorylated form interacts with LCP2. Phosphorylation is required for its function in T-cell activation. Expressed in T-cells (at protein level). Widely expressed.

The protein resides in the membrane raft. Functionally, adapter protein that plays a role in T-cell receptor (TCR)-mediated activation of signaling pathways. Required for T-cell activation and integrin-mediated T-cell adhesion in response to TCR stimulation. This Homo sapiens (Human) protein is FYN-binding protein 2.